The primary structure comprises 908 residues: Transferrin-binding protein A (908 aa).

The first 24 residues, 1 to 24 (MQQQHLFRLNILCLSLMTALPVYA), serve as a signal peptide directing secretion. A TonB box motif is present at residues 38–45 (DTIQVKAK). Residues 51-176 (RDNEVTGLGK…LAGSVAFQTK (126 aa)) form the TBDR plug domain. The TBDR beta-barrel domain occupies 187 to 908 (QWGIQSKTAY…NYTFSLEMKF (722 aa)). A TonB C-terminal box motif is present at residues 891-908 (NRYAAPGRNYTFSLEMKF).

Belongs to the TonB-dependent receptor family. In terms of assembly, binds both human apo- and holo-transferrin (TF), via the TF C-terminus. Forms a large complex with TF and TbpB.

The protein localises to the cell outer membrane. Functionally, neisseria acquires iron by extracting it from serum transferrin (TF) in its human host. Acts as a TF receptor and is required for TF utilization. Binds both apo- and holo-TF, via the TF C-terminus. The polypeptide is Transferrin-binding protein A (Neisseria meningitidis serogroup B).